The following is a 208-amino-acid chain: Putative proteasome subunit alpha type-4-B (208 aa).

This sequence belongs to the peptidase T1A family. As to quaternary structure, component of the 20S core complex of the 26S proteasome. The 26S proteasome is composed of a core protease (CP), known as the 20S proteasome, capped at one or both ends by the 19S regulatory particle (RP/PA700). The 20S proteasome core is composed of 28 subunits that are arranged in four stacked rings, resulting in a barrel-shaped structure. The two end rings are each formed by seven alpha subunits, and the two central rings are each formed by seven beta subunits. The catalytic chamber with the active sites is on the inside of the barrel.

Its subcellular location is the cytoplasm. The protein localises to the nucleus. The proteasome is a multicatalytic proteinase complex which is characterized by its ability to cleave peptides with Arg, Phe, Tyr, Leu, and Glu adjacent to the leaving group at neutral or slightly basic pH. The proteasome has an ATP-dependent proteolytic activity. In Arabidopsis thaliana (Mouse-ear cress), this protein is Putative proteasome subunit alpha type-4-B (PAC2).